A 105-amino-acid polypeptide reads, in one-letter code: Large ribosomal subunit protein uL24 (105 aa).

Belongs to the universal ribosomal protein uL24 family. As to quaternary structure, part of the 50S ribosomal subunit.

Its function is as follows. One of two assembly initiator proteins, it binds directly to the 5'-end of the 23S rRNA, where it nucleates assembly of the 50S subunit. One of the proteins that surrounds the polypeptide exit tunnel on the outside of the subunit. The chain is Large ribosomal subunit protein uL24 from Wolbachia sp. subsp. Brugia malayi (strain TRS).